We begin with the raw amino-acid sequence, 1588 residues long: Multicopy suppressor of chk1 protein 1 (1588 aa).

Residues H38–G60 are disordered. Residues N51 to G60 are compositionally biased toward polar residues. One can recognise a JmjN domain in the interval N82 to P124. A PHD-type 1 zinc finger spans residues K298–S345. The span at P385–P395 shows a compositional bias: polar residues. Residues P385 to K412 are disordered. The region spanning F475 to M645 is the JmjC domain. A disordered region spans residues E848 to L872. The PHD-type 2 zinc finger occupies F1171–R1220. Residues A1319 to Q1341 form a disordered region. Residues S1454–K1505 form a PHD-type 3 zinc finger.

The protein localises to the nucleus. Functionally, has a role in regulating chromatin structure via global deacetylation of histone H3. This function is associated with the activity of a histone deacetylase. The protein is Multicopy suppressor of chk1 protein 1 (msc1) of Schizosaccharomyces pombe (strain 972 / ATCC 24843) (Fission yeast).